The primary structure comprises 283 residues: Transmembrane protein 119 (283 aa).

The N-terminal stretch at 1–25 (MVSAAAPSLLILLLLLLGSVPATDA) is a signal peptide. Residues 26-96 (RSVPLKATFL…IVDFFRQYVM (71 aa)) are Extracellular-facing. Serine 41 carries O-linked (Xyl...) (chondroitin sulfate) serine glycosylation. Low complexity predominate over residues 43–52 (EAEGSSASSP). The tract at residues 43-76 (EAEGSSASSPSLPPPWTPALSPTSMGPQPITLGG) is disordered. The chain crosses the membrane as a helical span at residues 97–117 (LIAVVGSLAFLLMFIVCAAVI). The Cytoplasmic segment spans residues 118-283 (TRQKQKASAY…CACSSVHPSV (166 aa)). Disordered stretches follow at residues 136–168 (KYVDQSDRAGGPRAFSEVPDRAPDSRPEEALDS) and 183–283 (LKSP…HPSV). Composition is skewed to basic and acidic residues over residues 153–164 (VPDRAPDSRPEE) and 198–213 (RMVEGRGAEEEEKGSQ). Over residues 238 to 264 (GVLEGAVVAGEGQGELEGSLLLAQEAQ) the composition is skewed to low complexity. Serine 272 is subject to Phosphoserine.

Interacts with SMAD1, SMAD5 and RUNX2. In terms of tissue distribution, expressed in brain microglia (at protein level). Detected in urine (at protein level). Elevated expression levels seen in the brain of patients with Alzheimer disease. Expressed by osteoblast-like cells in bone tissues and follicular dendritic cells in lymphoid tissues.

It is found in the cell membrane. The protein resides in the cytoplasm. Its subcellular location is the endoplasmic reticulum membrane. The protein localises to the secreted. Plays an important role in bone formation and normal bone mineralization. Promotes the differentiation of myoblasts into osteoblasts. May induce the commitment and differentiation of myoblasts into osteoblasts through an enhancement of BMP2 production and interaction with the BMP-RUNX2 pathway. Up-regulates the expression of ATF4, a transcription factor which plays a central role in osteoblast differentiation. Essential for normal spermatogenesis and late testicular differentiation. In Homo sapiens (Human), this protein is Transmembrane protein 119 (TMEM119).